Consider the following 501-residue polypeptide: Lysine--tRNA ligase (501 aa).

Mg(2+) is bound by residues E411 and E418.

It belongs to the class-II aminoacyl-tRNA synthetase family. As to quaternary structure, homodimer. Requires Mg(2+) as cofactor.

The protein localises to the cytoplasm. The enzyme catalyses tRNA(Lys) + L-lysine + ATP = L-lysyl-tRNA(Lys) + AMP + diphosphate. This chain is Lysine--tRNA ligase, found in Clostridium perfringens (strain 13 / Type A).